Consider the following 197-residue polypeptide: Scoloptoxin SSD20 (197 aa).

The N-terminal stretch at 1 to 6 (PPMTTE) is a signal peptide.

Expressed by the venom gland.

The protein localises to the secreted. Its function is as follows. May act as a voltage-gated potassium channel inhibitor. Is highly similar to the subunit beta of SSD14 which, when complexed with subunit alpha, induces platelet aggregation and hemolysis. This Scolopendra dehaani (Thai centipede) protein is Scoloptoxin SSD20.